Consider the following 490-residue polypeptide: Aspartyl/glutamyl-tRNA(Asn/Gln) amidotransferase subunit B (490 aa).

It belongs to the GatB/GatE family. GatB subfamily. In terms of assembly, heterotrimer of A, B and C subunits.

The catalysed reaction is L-glutamyl-tRNA(Gln) + L-glutamine + ATP + H2O = L-glutaminyl-tRNA(Gln) + L-glutamate + ADP + phosphate + H(+). It carries out the reaction L-aspartyl-tRNA(Asn) + L-glutamine + ATP + H2O = L-asparaginyl-tRNA(Asn) + L-glutamate + ADP + phosphate + 2 H(+). In terms of biological role, allows the formation of correctly charged Asn-tRNA(Asn) or Gln-tRNA(Gln) through the transamidation of misacylated Asp-tRNA(Asn) or Glu-tRNA(Gln) in organisms which lack either or both of asparaginyl-tRNA or glutaminyl-tRNA synthetases. The reaction takes place in the presence of glutamine and ATP through an activated phospho-Asp-tRNA(Asn) or phospho-Glu-tRNA(Gln). In Methylorubrum extorquens (strain CM4 / NCIMB 13688) (Methylobacterium extorquens), this protein is Aspartyl/glutamyl-tRNA(Asn/Gln) amidotransferase subunit B.